Here is a 201-residue protein sequence, read N- to C-terminus: MSLSTLKNRRERGFFDGQFLIAMPGMEDRNFARTVIYICAHSDAGAMGFVINRPQSLTFTDVLLHLDMIKQEEPIVLPQRARDFPIQTGGPVESGRGFVLHSDDYASDSSIPVSDDICLTATLDIVRAISKGAGPKRATMLLGYSSWAAGQLENEVANNGWLTCPANEELIFDRNLDDKYERALAGMGINAAMLSAEAGHA.

Belongs to the UPF0301 (AlgH) family.

This Rhizobium etli (strain ATCC 51251 / DSM 11541 / JCM 21823 / NBRC 15573 / CFN 42) protein is UPF0301 protein RHE_CH00966.